We begin with the raw amino-acid sequence, 199 residues long: uncharacterized protein (199 aa).

The Nudix hydrolase domain maps to Asn-38 to Asn-169. The short motif at Gly-76–Ala-98 is the Nudix box element. Residues Glu-92 and Glu-96 each contribute to the Mg(2+) site.

The protein belongs to the Nudix hydrolase family. PCD1 subfamily. Requires Mn(2+) as cofactor. The cofactor is Mg(2+).

Functionally, probably mediates the hydrolysis of some nucleoside diphosphate derivatives. This is an uncharacterized protein from Yersinia pseudotuberculosis serotype I (strain IP32953).